Here is a 100-residue protein sequence, read N- to C-terminus: Glutamyl-tRNA(Gln) amidotransferase subunit C (100 aa).

The protein belongs to the GatC family. As to quaternary structure, heterotrimer of A, B and C subunits.

The enzyme catalyses L-glutamyl-tRNA(Gln) + L-glutamine + ATP + H2O = L-glutaminyl-tRNA(Gln) + L-glutamate + ADP + phosphate + H(+). The catalysed reaction is L-aspartyl-tRNA(Asn) + L-glutamine + ATP + H2O = L-asparaginyl-tRNA(Asn) + L-glutamate + ADP + phosphate + 2 H(+). In terms of biological role, allows the formation of correctly charged Asn-tRNA(Asn) or Gln-tRNA(Gln) through the transamidation of misacylated Asp-tRNA(Asn) or Glu-tRNA(Gln) in organisms which lack either or both of asparaginyl-tRNA or glutaminyl-tRNA synthetases. The reaction takes place in the presence of glutamine and ATP through an activated phospho-Asp-tRNA(Asn) or phospho-Glu-tRNA(Gln). The polypeptide is Glutamyl-tRNA(Gln) amidotransferase subunit C (Streptococcus pyogenes serotype M1).